A 546-amino-acid chain; its full sequence is uncharacterized protein (546 aa).

Transmembrane regions (helical) follow at residues 27–46, 59–78, 83–100, 114–134, 143–163, 176–196, 204–224, 237–257, and 268–288; these read EALV…PFVF, NGLI…ALVT, FALI…YAIL, SVLF…AYAA, PLII…IPIF, MLYS…ALGI, VIAV…VFTA, LSSA…FGVF, and MIWI…LIGW.

The protein resides in the cell membrane. This is an uncharacterized protein from Bacillus subtilis (strain 168).